Reading from the N-terminus, the 432-residue chain is Glutamyl-tRNA reductase (432 aa).

Substrate-binding positions include 50–53 (TCNR), S110, 115–117 (ETQ), and Q121. C51 acts as the Nucleophile in catalysis. 190 to 195 (GAGEMG) provides a ligand contact to NADP(+).

This sequence belongs to the glutamyl-tRNA reductase family. As to quaternary structure, homodimer.

The enzyme catalyses (S)-4-amino-5-oxopentanoate + tRNA(Glu) + NADP(+) = L-glutamyl-tRNA(Glu) + NADPH + H(+). The protein operates within porphyrin-containing compound metabolism; protoporphyrin-IX biosynthesis; 5-aminolevulinate from L-glutamyl-tRNA(Glu): step 1/2. In terms of biological role, catalyzes the NADPH-dependent reduction of glutamyl-tRNA(Glu) to glutamate 1-semialdehyde (GSA). This chain is Glutamyl-tRNA reductase, found in Nitratiruptor sp. (strain SB155-2).